We begin with the raw amino-acid sequence, 741 residues long: Zinc finger and BTB domain-containing protein 20 (741 aa).

Over residues 1-17 (MLERKKPKTAENQKASE) the composition is skewed to basic and acidic residues. A disordered region spans residues 1–32 (MLERKKPKTAENQKASEENEITQPGGSSAKPG). The BTB domain occupies 104 to 167 (CDVTVRIHGS…MYSGVLRVSQ (64 aa)). The tract at residues 203–235 (GIQDSGQDTPRGTPESGTSGQSSDTESGYLQSH) is disordered. Polar residues predominate over residues 206–235 (DSGQDTPRGTPESGTSGQSSDTESGYLQSH). Threonine 211 carries the post-translational modification Phosphothreonine. A Glycyl lysine isopeptide (Lys-Gly) (interchain with G-Cter in SUMO1); alternate cross-link involves residue lysine 330. Lysine 330 participates in a covalent cross-link: Glycyl lysine isopeptide (Lys-Gly) (interchain with G-Cter in SUMO2); alternate. The segment at 350–440 (RNESEECTED…SSPERSNEVE (91 aa)) is disordered. Serine 353 is modified (phosphoserine). A compositionally biased stretch (acidic residues) spans 354–367 (EECTEDTDQAEGTE). Residue threonine 357 is modified to Phosphothreonine. Lysine 371 participates in a covalent cross-link: Glycyl lysine isopeptide (Lys-Gly) (interchain with G-Cter in SUMO2). Residues 404–423 (AEPTQPEQAAEAPAEGGPQT) are compositionally biased toward low complexity. Residues 424–434 (NQLETGASSPE) are compositionally biased toward polar residues. 4 consecutive C2H2-type zinc fingers follow at residues 578–600 (YECTLCNKTFTAKQNYVKHMFVH), 606–628 (HQCSICWRSFSLKDYLIKHMVTH), 634–656 (YQCSICNKRFTQKSSLNVHMRLH), and 662–684 (YECYICKKKFSHKTLLERHVALH). A phosphothreonine mark is found at threonine 690 and threonine 695. The segment at 715 to 737 (YVCSVCPAKFDQIEQFNDHMRMH) adopts a C2H2-type 5 zinc-finger fold. Residue lysine 723 forms a Glycyl lysine isopeptide (Lys-Gly) (interchain with G-Cter in SUMO2) linkage.

As to quaternary structure, can homodimerize. Binds to DNA. Post-translationally, sumoylated with SUMO1. As to expression, expressed in spleen, lymph node, thymus, peripheral blood leukocytes, and fetal liver.

It is found in the nucleus. May be a transcription factor that may be involved in hematopoiesis, oncogenesis, and immune responses. Plays a role in postnatal myogenesis, may be involved in the regulation of satellite cells self-renewal. In Homo sapiens (Human), this protein is Zinc finger and BTB domain-containing protein 20 (ZBTB20).